The primary structure comprises 163 residues: Nucleotide-binding protein BPUM_1028 (163 aa).

Belongs to the YajQ family.

In terms of biological role, nucleotide-binding protein. This Bacillus pumilus (strain SAFR-032) protein is Nucleotide-binding protein BPUM_1028.